The chain runs to 571 residues: Isocitrate dehydrogenase kinase/phosphatase 2 (571 aa).

Residues Ala313 to Met319 and Lys334 contribute to the ATP site. Asp369 is an active-site residue.

It belongs to the AceK family.

It is found in the cytoplasm. It catalyses the reaction L-seryl-[isocitrate dehydrogenase] + ATP = O-phospho-L-seryl-[isocitrate dehydrogenase] + ADP + H(+). Bifunctional enzyme which can phosphorylate or dephosphorylate isocitrate dehydrogenase (IDH) on a specific serine residue. This is a regulatory mechanism which enables bacteria to bypass the Krebs cycle via the glyoxylate shunt in response to the source of carbon. When bacteria are grown on glucose, IDH is fully active and unphosphorylated, but when grown on acetate or ethanol, the activity of IDH declines drastically concomitant with its phosphorylation. The sequence is that of Isocitrate dehydrogenase kinase/phosphatase 2 from Pseudoalteromonas translucida (strain TAC 125).